The sequence spans 1296 residues: Phosphoribosylformylglycinamidine synthase (1296 aa).

Positions 300–325 are disordered; the sequence is APFSGAATGSGGEIRDEGATGRGSKP. ATP is bound by residues 304–315 and Ala-675; that span reads GAATGSGGEIRD. Glu-715, Asn-719, and Asp-885 together coordinate Mg(2+). Ser-887 serves as a coordination point for ATP. The Glutamine amidotransferase type-1 domain maps to 1043 to 1296; that stretch reads MAILREQGVN…MFRNARKNVG (254 aa). Cys-1136 (nucleophile) is an active-site residue. The tract at residues 1232 to 1253 is disordered; the sequence is TQYPANPNGSPEGITGITSTDG. Residues His-1261 and Glu-1263 contribute to the active site.

It in the N-terminal section; belongs to the FGAMS family. In terms of assembly, monomer.

The protein resides in the cytoplasm. It catalyses the reaction N(2)-formyl-N(1)-(5-phospho-beta-D-ribosyl)glycinamide + L-glutamine + ATP + H2O = 2-formamido-N(1)-(5-O-phospho-beta-D-ribosyl)acetamidine + L-glutamate + ADP + phosphate + H(+). Its pathway is purine metabolism; IMP biosynthesis via de novo pathway; 5-amino-1-(5-phospho-D-ribosyl)imidazole from N(2)-formyl-N(1)-(5-phospho-D-ribosyl)glycinamide: step 1/2. Its function is as follows. Phosphoribosylformylglycinamidine synthase involved in the purines biosynthetic pathway. Catalyzes the ATP-dependent conversion of formylglycinamide ribonucleotide (FGAR) and glutamine to yield formylglycinamidine ribonucleotide (FGAM) and glutamate. The sequence is that of Phosphoribosylformylglycinamidine synthase from Pseudoalteromonas translucida (strain TAC 125).